We begin with the raw amino-acid sequence, 65 residues long: MKLITYVKEGESIDRVLKKCKQKFDKARIIRKLRERQQYIKPSERKRKILAKAKYREFRKLLADD.

This sequence belongs to the bacterial ribosomal protein bS21 family.

The polypeptide is Small ribosomal subunit protein bS21 (Aster yellows phytoplasma).